We begin with the raw amino-acid sequence, 927 residues long: Protein unc-45 homolog B (927 aa).

TPR repeat units follow at residues 4–37 (PVQLKEEGNKYFQSNEYGQAIQCYSKALKLITDK), 41–74 (AVLYRNRSACYLKQDNYVQAAADASKAIDVDASD), and 76–108 (KALFRRCQALEKLGKLDQAYKDVQRCATLEPKN). ARM repeat units follow at residues 167-206 (DAGAEQIFQNNGVNLLMQLIESKDPEMILSAIRTLSGMCT), 209-248 (RARATAIVHLVGINKICSIMAVDNEEIALAACNLLQNIVD), and 746-785 (DKLRQKIIKEKALPEIENYMFENHEQIRQAATECMCNLAL).

In terms of tissue distribution, detected initially throughout the somites and the heart and gradually also expressed in the jaw, branchial arches and body wall muscles at later embryonic stages.

Its subcellular location is the cytoplasm. It localises to the myofibril. The protein localises to the sarcomere. It is found in the z line. The protein resides in the a band. Its subcellular location is the perinuclear region. It localises to the cytosol. In terms of biological role, acts as a co-chaperone for HSP90 and is required for proper folding of the myosin motor domain. Plays a role in sarcomere formation during muscle cell development. Is necessary for normal early lens development. In Xenopus tropicalis (Western clawed frog), this protein is Protein unc-45 homolog B.